Reading from the N-terminus, the 315-residue chain is PIH1 domain-containing protein 2 (315 aa).

Belongs to the PIH1 family.

The protein is PIH1 domain-containing protein 2 (PIH1D2) of Bos taurus (Bovine).